The primary structure comprises 149 residues: Calmodulin-like protein (149 aa).

4 EF-hand domains span residues Thr-6 to Asn-41, Pro-42 to Tyr-76, Asp-78 to Lys-113, and Lys-113 to Phe-148. Ca(2+) contacts are provided by Asp-19, Asp-21, Asp-23, Lys-25, and Glu-30.

Belongs to the calmodulin family.

It is found in the contractile vacuole. Mediates the control of a large number of enzymes, ion channels and other proteins by Ca(2+) ions. Among the enzymes to be stimulated by the calmodulin-Ca(2+) complex are a number of protein kinases and phosphatases. This is Calmodulin-like protein (calB) from Dictyostelium discoideum (Social amoeba).